Here is a 187-residue protein sequence, read N- to C-terminus: RNA pyrophosphohydrolase (187 aa).

One can recognise a Nudix hydrolase domain in the interval 6-149 (GYRANVGIIL…KRQVYRQALT (144 aa)). A Nudix box motif is present at residues 38–59 (GGIKSGETPTEAMYRELAEETG). The tract at residues 166–187 (AYREPLEPVEKNRKKSSDTRQS) is disordered.

It belongs to the Nudix hydrolase family. RppH subfamily. Requires a divalent metal cation as cofactor.

In terms of biological role, accelerates the degradation of transcripts by removing pyrophosphate from the 5'-end of triphosphorylated RNA, leading to a more labile monophosphorylated state that can stimulate subsequent ribonuclease cleavage. The protein is RNA pyrophosphohydrolase of Nitrosomonas europaea (strain ATCC 19718 / CIP 103999 / KCTC 2705 / NBRC 14298).